Reading from the N-terminus, the 118-residue chain is Hisactophilin-1 (118 aa).

The N-myristoyl glycine moiety is linked to residue Gly2. The tract at residues 8–109 (SHHGHFLSAE…HVSTKEHHDH (102 aa)) is contains several HHXH repeats. Repeat copies occupy residues 34-46 (FHVE…VALK) and 74-86 (FHLE…VSIK). Residues 34–86 (FHVENHGGKVALKTHCGKYLSIGDHKQVYLSHHLHGDHSLFHLEHHGGKVSIK) are 2 X 13 AA approximate repeats.

It belongs to the hisactophilin family. In terms of assembly, homodimer or heterodimer of hatA and hatB, linked by a disulfide bond. Phosphorylated.

It localises to the cytoplasm. The protein resides in the cell membrane. Its function is as follows. May act as an intracellular pH sensor that links chemotactic signals to responses in the microfilament system of the cells by nucleating actin polymerization or stabilizing the filaments. This Dictyostelium discoideum (Social amoeba) protein is Hisactophilin-1 (hatA).